The primary structure comprises 205 residues: NADH dehydrogenase (205 aa).

FMN-binding positions include 17-21 (RRSIR), Q73, 158-159 (LG), and R195.

It belongs to the nitroreductase family. In terms of assembly, homodimer. It depends on FMN as a cofactor.

The catalysed reaction is a ubiquinone + NADH + 5 H(+)(in) = a ubiquinol + NAD(+) + 4 H(+)(out). Functionally, can oxidize either NADH or NADPH with a preference for NADH. Can catalyze electron transfer from NADH to various electron acceptors which include, in addition to molecular oxygen, cytochrome c, 2,6 dichlorphenolindophenol, methylene blue, ferricyanide or P-nitroblue tetrazolium. This is NADH dehydrogenase (nox) from Thermus thermophilus (strain ATCC 27634 / DSM 579 / HB8).